The chain runs to 285 residues: Acetyl-coenzyme A carboxylase carboxyl transferase subunit beta (285 aa).

The 263-residue stretch at 23–285 (VFRRCDGCSH…HLTAGRRARR (263 aa)) folds into the CoA carboxyltransferase N-terminal domain. 4 residues coordinate Zn(2+): Cys-27, Cys-30, Cys-46, and Cys-49. The C4-type zinc-finger motif lies at 27–49 (CDGCSHTHDAAELARTFEVCSQC).

Belongs to the AccD/PCCB family. Acetyl-CoA carboxylase is a heterohexamer composed of biotin carboxyl carrier protein (AccB), biotin carboxylase (AccC) and two subunits each of ACCase subunit alpha (AccA) and ACCase subunit beta (AccD). It depends on Zn(2+) as a cofactor.

The protein localises to the cytoplasm. The catalysed reaction is N(6)-carboxybiotinyl-L-lysyl-[protein] + acetyl-CoA = N(6)-biotinyl-L-lysyl-[protein] + malonyl-CoA. Its pathway is lipid metabolism; malonyl-CoA biosynthesis; malonyl-CoA from acetyl-CoA: step 1/1. Functionally, component of the acetyl coenzyme A carboxylase (ACC) complex. Biotin carboxylase (BC) catalyzes the carboxylation of biotin on its carrier protein (BCCP) and then the CO(2) group is transferred by the transcarboxylase to acetyl-CoA to form malonyl-CoA. The polypeptide is Acetyl-coenzyme A carboxylase carboxyl transferase subunit beta (Sorangium cellulosum (strain So ce56) (Polyangium cellulosum (strain So ce56))).